Reading from the N-terminus, the 400-residue chain is Subtilisin-like protease 7 (400 aa).

Residues 1–20 (MGFITKAIPLALAAASVING) form the signal peptide. Residues 21–119 (AEIMETRAGV…IERDARVQIN (99 aa)) constitute a propeptide that is removed on maturation. Residues 36–118 (KYIVVMNDGM…YIERDARVQI (83 aa)) enclose the Inhibitor I9 domain. N-linked (GlcNAc...) asparagine glycosylation is present at asparagine 58. The Peptidase S8 domain maps to 129–400 (SWGLARVGSK…SKLINNGSGM (272 aa)). Residues aspartate 161 and histidine 192 each act as charge relay system in the active site. Asparagine 222 and asparagine 252 each carry an N-linked (GlcNAc...) asparagine glycan. Residue serine 346 is the Charge relay system of the active site. A glycan (N-linked (GlcNAc...) asparagine) is linked at asparagine 396.

This sequence belongs to the peptidase S8 family.

It localises to the secreted. Secreted subtilisin-like serine protease with keratinolytic activity that contributes to pathogenicity. In Arthroderma benhamiae (Trichophyton mentagrophytes), this protein is Subtilisin-like protease 7 (SUB7).